The primary structure comprises 1038 residues: MGLIKKVTHWSYDNLIDYLSVNPTRDEVTHYKVDPENESDESIIKLHTVKDFGSITCLDYSESEIGMIGVGEKNGYLRIFNISGQNSSSPASHAPVGLNANNETSMTNASGGKAAQAENIVGSVSNLKDTQGYPVSETNYDIRVRAKKQRCINSLGINTNGLIAMGLDRNKHDSSLQIWDMNYHDDSHETINPMFSYCTNESIVSLKFLNDTSVLAASTKFLKEIDVRSPNPIYQHPTRLTYDIKLNPFNDWQFSTYGDDGTLAIWDRRKLSDQASLGDLNVASPLLTFEKLVGSGAASRKYMNSCFRWSCVRNNEFATLHRGDTIKRWRLGYYCDSNRDIAADDDNEMNIENLFVSSVHDTNTMYDRVATFDYIPRSNNGTSLICMRQSGTIYRMPISEVCSKAILNNRNSLLLSNFENTEIDEIRVNNEHEKSNLENVKTILKNLSFEDLDVSEDYFPSGHDEPNNEIEYSELSEEENEGSNDVLDSKRGFELFWKPEKLLEKDISVIMRTRASLGYGLDPMNTVEMIDSSKNLQNNAYIRNTWRWIAIAKASVDDGTMVSGDLDLGYEGVIGIWNGINGISNQDRYRQETILSDKQLNKEMEKIIKLRRKNRDRNSPIANAAGSPKYVQRRLCLIISGWDLSRSDYEDKYNIIMKNGHYEKAAAWAVFFGDIPKAVEILGSAKKERLRLIATAIAGYLAYKDLPGNNAWRQQCRKMSSELDDPYLRVIFAFIADNDWWDILYEPAISLRERLGVALRFLNDTDLTTFLDRTSSTVIENGELEGLILTGITPNGIDLLQSYVNKTSDVQSAALISIFGSPRYFRDQRVDEWIQTYRDMLKSWELFSMRARFDVLRSKLSRTKTGVLTADIKPRQIYIQCQNCKQNINTPRTSSPSSAVSTSAGNYKNGEAYRRNNADYKKFNTGSSEAQAADEKPRHKYCCPHCGSSFPRCAICLMPLGTSNLPFVINGTQSRDPMQTEDSQDGANRELVSRKLKLNEWFSFCLSCNHGMHAGHAEEWFDRHNVCPTPGCTCQCNK.

The WD 1 repeat unit spans residues 50-90 (KDFGSITCLDYSESEIGMIGVGEKNGYLRIFNISGQNSSSP). Phosphoserine occurs at positions 123 and 136. WD repeat units follow at residues 147–189 (KKQR…DSHE), 235–276 (QHPT…DQAS), and 544–587 (NTWR…SNQD).

Belongs to the WD repeat mio family. As to quaternary structure, component of the SEA complex composed of at least IML1/SEA1, RTC1/SEA2, MTC5/SEA3, NPR2, NPR3, SEA4, SEC13 and SEH1.

The protein resides in the cytoplasm. It is found in the vacuole membrane. Component of the SEA complex which coats the vacuolar membrane and is involved in intracellular trafficking, autophagy, response to nitrogen starvation, and amino acid biogenesis. This Saccharomyces cerevisiae (strain ATCC 204508 / S288c) (Baker's yeast) protein is SEH-associated protein 4 (SEA4).